We begin with the raw amino-acid sequence, 1399 residues long: MNQEIMNLFNPTTPAQVFDQIRISIASPEKILSWSYGEIKKPETINYRTFKPERDGLFCARIFGPIKDYECLCGKYKRMKYKGIICEKCSVEVTLSRVRRERMGHIELAAPVAHIWFLKSLPSRIGLLLDMTLKDLERILYFEYYVVLEPGLTALKDRQLLSEEEYLKAQDEYGQDSFTAMIGAEAIRELLRGLDLEKLEAQLRADMAETDSDIKHKKFAKRLKIVEAFRNSGNKPEWMIMTVVPVIPPDLRPLVPLDGGRFATSDLNDLYRRVINRNNRLKRLMELRAPDIIIRNEKRMLQEAVDALFDNGRRGRVITGANKRPLKSLADMLKGKQGRFRQNLLGKRVDYSGRSVIVVGPELKLHQCGLPKKMALELFKPFIYSRLDAKGLSTTVKQAKKLVEKERPEVWDILDEVIREHPVLLNRAPTLHRLGIQAFEPTLIEGKAIQLHPLVCAAFNADFDGDQMAVHVPLSLEAQLEARVLMMSTNNILHPANGQPIIVPSQDIVLGLYYLSIMREGLAGEGKVYGEMAEIEHALYSKVIHLHTKIKYRWHGVGEDGKPVTKWYETTAGRVMLGQVLPNHPKIPFDAINKLMTKREISGVIDQVYRHCGQKETVIFCDRIMALGFHNAFKAGISFGKDDMVVPQGKWKVVDDTRSMAKEFEQQYNDGLITQGEKYNKVVDAWSKATEKIADEMMKEISSVKKTTKGNEAQINSIYMMAHSGARGSPAQMRQLAGMRGLMAKPSGEIIETPIISNFKEGLSVLEYFNSTHGARKGLADTALKTANSGYLTRRLVDVAQDCIINASDCGTNLGIKMRAIVDAGTVVASLGSRILGRTACEDIREPSTNNVIVPRGTLMEESHVDAIQRAGVQEVKIRSALTCELVNGICAMCYGRDLARGTPVNHGEAVGVIAAQSIGEPGTQLTMRTFHIGGAAQINEQSFVESNFDGKVTIRNRGIATNSEGASVAMVRNMVVAIVDADGTERVTHRVQYGARMRVDEGDTIKRGQRIAEWDPYTRPILTEVEGTIGFEDLVEGQSISETLDESTGIAKRVVIDWRSTGRGADLRPAIVVKGKDGKVLKLQRGGDARYMLSVDAILSVDIGSQVKPGDILARISTESAKTRDITGGLPRVAELFEARRPKDAAIIAETAGTIRFGRDYKNKRRISIEPTDKTEEPREYLIPKGKHIHLQDGDIVEKGDFIVEGNPAPHDILAIKGIEELAAYLVNEIQEVYRLQGVLINDKHIEVIVRQMLQKVEVTDQGDTDMISGEQVDKIEFDQNNDKAKEEGKKPATGTPVLLGITKASLQTRSFFSAASFQETTRVLTEAAVNGKVDPLEGLKENVIVGRLIPAGTGASMAKIREVAMKRDKLIQDEREKQAAITPAAPEAEPLALPPAE.

The Zn(2+) site is built by Cys-71, Cys-73, Cys-86, and Cys-89. Positions 462, 464, and 466 each coordinate Mg(2+). Residues Cys-810, Cys-884, Cys-891, and Cys-894 each coordinate Zn(2+). The tract at residues 1376-1399 (EREKQAAITPAAPEAEPLALPPAE) is disordered.

This sequence belongs to the RNA polymerase beta' chain family. The RNAP catalytic core consists of 2 alpha, 1 beta, 1 beta' and 1 omega subunit. When a sigma factor is associated with the core the holoenzyme is formed, which can initiate transcription. It depends on Mg(2+) as a cofactor. Zn(2+) is required as a cofactor.

The enzyme catalyses RNA(n) + a ribonucleoside 5'-triphosphate = RNA(n+1) + diphosphate. DNA-dependent RNA polymerase catalyzes the transcription of DNA into RNA using the four ribonucleoside triphosphates as substrates. The protein is DNA-directed RNA polymerase subunit beta' of Afipia carboxidovorans (strain ATCC 49405 / DSM 1227 / KCTC 32145 / OM5) (Oligotropha carboxidovorans).